The sequence spans 339 residues: Phenylalanine--tRNA ligase alpha subunit (339 aa).

Residue Glu-254 coordinates Mg(2+).

It belongs to the class-II aminoacyl-tRNA synthetase family. Phe-tRNA synthetase alpha subunit type 1 subfamily. As to quaternary structure, tetramer of two alpha and two beta subunits. Mg(2+) is required as a cofactor.

The protein resides in the cytoplasm. It carries out the reaction tRNA(Phe) + L-phenylalanine + ATP = L-phenylalanyl-tRNA(Phe) + AMP + diphosphate + H(+). In Clostridium botulinum (strain 657 / Type Ba4), this protein is Phenylalanine--tRNA ligase alpha subunit.